The primary structure comprises 773 residues: MAKETFSIEFAGRTLTVETGQVAKQANGAVVVRYGDTTVLTAATMGKMATGDFFPLQVNYEEKMYAAGKFPGGFNKREARPSTDATLTARLIDRPIRPMFAEGFRNEVQVINTVLSYDENASGRVAAMFGSSLALAISDIPFDRPIAGVEVAYIDGEYIINPTVAEKEASSLELSVAGNINAINMVESGAKELSEEVMLGALLAGHNAVKELIEFQNEIVAKVGKEKAEVELLHVDEDLKAEVIAAYNSDLQKAVQIEEKLARESATKAVKEAIISVYSAKYENDENLSIILRDLAEILEGMEHAEVRRLITEDKIRPDGRKIDEIRPLDAEIDFTPRNITHGTGLFTRGQTQALSTLTLAPMNEAQIIDGLNDEYKKRFMHHYNFPQYSVGETGRYGAPGRREIGHGALGERALEQVLPSLEEFPYAIRLVAEVLESNGSSSQASICAGTLALMAGGVPIKAPVAGIAMGLISDGTNYTVLTDIQGLEDHFGDMDFKVAGTRDGITALQMDIKISGITPEILAEALAQAKTARFQILDVIEATIAQPREELAPSAPKIDTITIPVDKIKVVIGKGGEQIDKIIAETGVKIDIDDEGLCSIFSSDQAAIDRAKEIIAELVREAKVGEIYDAKVVRIESFGAFVNLFGKQDAMVHISEMAWARTENVEDVVKLGDTVKVKIMKIDDKGRVDASMRALVEKPEGYVEPERKPRERRENGDRRKGNGNSNRGNGFDRRNNDRNNQGNKVGNHSFELRERKSHIDEEFPELSTKKPE.

Positions 490 and 496 each coordinate Mg(2+). A KH domain is found at 557–616 (PKIDTITIPVDKIKVVIGKGGEQIDKIIAETGVKIDIDDEGLCSIFSSDQAAIDRAKEII). Residues 626–694 (GEIYDAKVVR…DKGRVDASMR (69 aa)) enclose the S1 motif domain. The segment covering 700–721 (PEGYVEPERKPRERRENGDRRK) has biased composition (basic and acidic residues). The tract at residues 700–773 (PEGYVEPERK…FPELSTKKPE (74 aa)) is disordered. A compositionally biased stretch (low complexity) spans 739-748 (RNNQGNKVGN). The span at 751 to 773 (FELRERKSHIDEEFPELSTKKPE) shows a compositional bias: basic and acidic residues.

Belongs to the polyribonucleotide nucleotidyltransferase family. It depends on Mg(2+) as a cofactor.

The protein resides in the cytoplasm. It catalyses the reaction RNA(n+1) + phosphate = RNA(n) + a ribonucleoside 5'-diphosphate. Its function is as follows. Involved in mRNA degradation. Catalyzes the phosphorolysis of single-stranded polyribonucleotides processively in the 3'- to 5'-direction. The chain is Polyribonucleotide nucleotidyltransferase from Lactococcus lactis subsp. lactis (strain IL1403) (Streptococcus lactis).